Consider the following 434-residue polypeptide: Probable glucuronosyltransferase Os02g0520750 (434 aa).

Residues 1–10 (MVGARAGRVP) are Cytoplasmic-facing. The chain crosses the membrane as a helical; Signal-anchor for type II membrane protein span at residues 11-31 (AAAAAAAAVLIVAACVFSSLA). Residues 32–434 (GAAAAAEVVG…GPVADLKPWK (403 aa)) are Lumenal-facing. N-linked (GlcNAc...) asparagine glycans are attached at residues asparagine 160 and asparagine 421.

This sequence belongs to the glycosyltransferase 47 family.

Its subcellular location is the golgi apparatus membrane. Its function is as follows. Involved in the synthesis of glucuronoxylan hemicellulose in secondary cell walls. The chain is Probable glucuronosyltransferase Os02g0520750 from Oryza sativa subsp. japonica (Rice).